The sequence spans 450 residues: MEEPQKNDLSMRGQEEDHPVRSSGPQISVSEFSCHCCYDTLVNPTTLNCGHSFCRHCLALWWMSSKKTECPECREKWEGFPKVNILLRDAIEKLFPDAIKMRVEDIQQNNDVVQSLAAFQKYGNDQNPLAPSTGRVNQQRGGGFFSGVLTALTGVAVILLVYHWRSRESEHGLLVHKAVDKWTTEEVVLWLEQLGPWASLYRDRFLSERVNGRLLLTLTEEEFSRAPYTIENSSHRRVILMELERVRALGVKPPQNLWEYKAVNPGRSLFLLYALKSSPRLGLLYLYLFDYTDSFLPFIHTICPLQEDSFGEDIFTKLLDLREPTWKQWREFLIKYSFLPYQLIAEFAWDWLEVHYWTSRFLIVNAMLLSVLELFSFWRIWSRSELKTVPQRMWSHFWKVSTQGLFMAMFWPLIPQFVCNCLFYWALYFNPIINIDLVVKEIRRLETQVF.

Residues 1–24 (MEEPQKNDLSMRGQEEDHPVRSSG) are disordered. Residues 1 to 140 (MEEPQKNDLS…PSTGRVNQQR (140 aa)) lie on the Cytoplasmic side of the membrane. An RING-type zinc finger spans residues 34-74 (CHCCYDTLVNPTTLNCGHSFCRHCLALWWMSSKKTECPECR). Residues 141–161 (GGGFFSGVLTALTGVAVILLV) form a helical membrane-spanning segment. Over 162–331 (YHWRSRESEH…REPTWKQWRE (170 aa)) the chain is Extracellular. Positions 182-249 (WTTEEVVLWL…LMELERVRAL (68 aa)) constitute an SAM domain. An N-linked (GlcNAc...) asparagine glycan is attached at Asn232. A helical membrane pass occupies residues 332–352 (FLIKYSFLPYQLIAEFAWDWL). Topologically, residues 353–360 (EVHYWTSR) are cytoplasmic. The helical transmembrane segment at 361–381 (FLIVNAMLLSVLELFSFWRIW) threads the bilayer. Residues 382-404 (SRSELKTVPQRMWSHFWKVSTQG) are Extracellular-facing. Residues 405 to 425 (LFMAMFWPLIPQFVCNCLFYW) form a helical membrane-spanning segment. Residues 426-450 (ALYFNPIINIDLVVKEIRRLETQVF) lie on the Cytoplasmic side of the membrane.

Interacts with CASP8, BCL2 and BCL2L1 through SAM domain and also with HIP1, IFT57, ESRRBL1 and BCAP31. Interacts with NGFR; this interaction inhibits NF-kappa-B and JNK-related signaling pathways. Mediates RING-dependent self-ubiquitination leading to proteasomal degradation.

The protein localises to the endoplasmic reticulum membrane. The enzyme catalyses S-ubiquitinyl-[E2 ubiquitin-conjugating enzyme]-L-cysteine + [acceptor protein]-L-lysine = [E2 ubiquitin-conjugating enzyme]-L-cysteine + N(6)-ubiquitinyl-[acceptor protein]-L-lysine.. In terms of biological role, membrane-bound E3 ubiquitin ligase that plays a role in several processes including apoptosis regulation or reticulum endoplasmic stress. Has anti-apoptotic activity, both for apoptosis triggered via death-receptors and via mitochondrial factors. Contributes to the dynamic control of IRE1/ERN1 signaling during ER stress by inducing BAX inhibitor 1/TMBIM6 proteasomal degradation. Promotes the activation of TGF-beta signaling by mediating the 'Lys-63'-linked ubiquitination of TGFBR1 which is critical to activate the pathway. Together with NGFR, negatively regulates NF-kappa-B and JNK-related signaling pathways. Promotes the proteasome-mediated degradation of PNPLA3, a protein involveld in lipid metabolism. This Rattus norvegicus (Rat) protein is Bifunctional apoptosis regulator (Bfar).